The primary structure comprises 375 residues: Fluoride export protein 2 (375 aa).

Over 1 to 11 (MIFNPVISNHK) the chain is Cytoplasmic. A helical transmembrane segment spans residues 12–32 (LSHYIHVFCTFTTFCILGTET). At 33–34 (RQ) the chain is on the extracellular side. A helical membrane pass occupies residues 35 to 55 (AITALSTYTPAFVTAPTVLWS). The Cytoplasmic portion of the chain corresponds to 56 to 79 (NCSSCMLMGIMQSLNAYTWMKDHQ). Residues 80-100 (VLFLGVTTGYCGALSSFSSML) traverse the membrane as a helical segment. The Extracellular segment spans residues 101 to 127 (LEMFEHSTNLTNGNIANHTKLPNRAYG). N109 and N117 each carry an N-linked (GlcNAc...) asparagine glycan. The chain crosses the membrane as a helical span at residues 128 to 148 (IMEFLSVLLVHLMVSMGSLIF). Residues 149–213 (GRQLGKEVIV…FKKFFDVVDK (65 aa)) lie on the Cytoplasmic side of the membrane. The chain crosses the membrane as a helical span at residues 214-234 (LAYALAFPLIILFVVLCAYYE). Residue N235 is glycosylated (N-linked (GlcNAc...) asparagine). The Extracellular portion of the chain corresponds to 235–241 (NYSRGKW). Residues 242 to 262 (TLPCLFGIFAGFLRYWLAEMF) form a helical membrane-spanning segment. The Cytoplasmic segment spans residues 263–268 (NKTNKK). Residues 269 to 289 (FPLGTFLANVFATLLIGIFTM) form a helical membrane-spanning segment. At 290-310 (VQRGKKHFSTDIPIVNSLNSC) the chain is on the extracellular side. A helical membrane pass occupies residues 311-331 (HIVSALISGFCGTLSTISTFI). Over 332–338 (NEGYKLS) the chain is Cytoplasmic. A helical membrane pass occupies residues 339–359 (FINMLIYYTVSIGISYCLLVI). At 360 to 375 (TLGSYAWTRGLTNPIC) the chain is on the extracellular side.

This sequence belongs to the fluoride channel Fluc/FEX (TC 1.A.43) family.

It is found in the cell membrane. It catalyses the reaction fluoride(in) = fluoride(out). Fluoride channel required for the rapid expulsion of cytoplasmic fluoride. This is Fluoride export protein 2 from Saccharomyces cerevisiae (strain ATCC 204508 / S288c) (Baker's yeast).